A 435-amino-acid chain; its full sequence is Sulfopropanediol 3-dehydrogenase (435 aa).

NAD(+) is bound by residues tyrosine 119, glutamine 181, and asparagine 204. Zn(2+)-binding residues include glutamine 249 and histidine 252. Active-site proton acceptor residues include glutamate 319 and histidine 320. Zn(2+) contacts are provided by aspartate 353 and histidine 412.

Belongs to the histidinol dehydrogenase family. HpsN subfamily. Zn(2+) is required as a cofactor.

The enzyme catalyses (2R)-3-sulfopropanediol + 2 NAD(+) + H2O = (2R)-3-sulfolactate + 2 NADH + 3 H(+). Catalyzes the NAD-dependent oxidation of (R)-2,3-dihydroxypropane-1-sulfonate to (R)-3-sulfolactate. The sequence is that of Sulfopropanediol 3-dehydrogenase from Ruegeria pomeroyi (strain ATCC 700808 / DSM 15171 / DSS-3) (Silicibacter pomeroyi).